A 181-amino-acid chain; its full sequence is uncharacterized protein (181 aa).

An N-terminal signal peptide occupies residues Met1 to Thr22.

This is an uncharacterized protein from Halorubrum pleomorphic virus 1 (HRPV-1).